The chain runs to 243 residues: Protein GrpE (243 aa).

This sequence belongs to the GrpE family. Homodimer.

The protein resides in the cytoplasm. Its function is as follows. Participates actively in the response to hyperosmotic and heat shock by preventing the aggregation of stress-denatured proteins, in association with DnaK and GrpE. It is the nucleotide exchange factor for DnaK and may function as a thermosensor. Unfolded proteins bind initially to DnaJ; upon interaction with the DnaJ-bound protein, DnaK hydrolyzes its bound ATP, resulting in the formation of a stable complex. GrpE releases ADP from DnaK; ATP binding to DnaK triggers the release of the substrate protein, thus completing the reaction cycle. Several rounds of ATP-dependent interactions between DnaJ, DnaK and GrpE are required for fully efficient folding. The sequence is that of Protein GrpE from Mycoplasma mobile (strain ATCC 43663 / 163K / NCTC 11711) (Mesomycoplasma mobile).